Here is a 334-residue protein sequence, read N- to C-terminus: uncharacterized protein (334 aa).

Belongs to the MG414/MG415 family.

This is an uncharacterized protein from Mycoplasma pneumoniae (strain ATCC 29342 / M129 / Subtype 1) (Mycoplasmoides pneumoniae).